A 1573-amino-acid polypeptide reads, in one-letter code: Pentafunctional AROM polypeptide 1 (1573 aa).

The segment at 1 to 380 (MAEPTKISIL…YEPKASVVSN (380 aa)) is 3-dehydroquinate synthase. Residues 44–46 (DTN), 81–84 (ENSK), 112–114 (GGV), and Asp117 contribute to the NAD(+) site. Arg128 provides a ligand contact to 7-phospho-2-dehydro-3-deoxy-D-arabino-heptonate. 137 to 138 (TT) is an NAD(+) binding site. Positions 144 and 150 each coordinate 7-phospho-2-dehydro-3-deoxy-D-arabino-heptonate. Lys159 lines the NAD(+) pocket. Residue Asn160 coordinates 7-phospho-2-dehydro-3-deoxy-D-arabino-heptonate. Residues 177-180 (FIDT) and Asn188 each bind NAD(+). Glu192 provides a ligand contact to Zn(2+). 7-phospho-2-dehydro-3-deoxy-D-arabino-heptonate-binding positions include 192–195 (EVIK) and Lys246. The Proton acceptor; for 3-dehydroquinate synthase activity role is filled by Glu256. 7-phospho-2-dehydro-3-deoxy-D-arabino-heptonate-binding positions include 260-264 (RNLLN) and His267. Position 267 (His267) interacts with Zn(2+). His271 functions as the Proton acceptor; for 3-dehydroquinate synthase activity in the catalytic mechanism. 2 residues coordinate 7-phospho-2-dehydro-3-deoxy-D-arabino-heptonate: His283 and Lys352. His283 is a binding site for Zn(2+). The tract at residues 393 to 838 (VIPGVPKDLN…WDALKQKFGV (446 aa)) is EPSP synthase. The For EPSP synthase activity role is filled by Cys820. The tract at residues 859 to 1051 (DASIVIIGMR…RRKRLSFFMS (193 aa)) is shikimate kinase. Residue 866–873 (GMRGAGKT) participates in ATP binding. Residues 1052–1273 (LTLTDLRDSG…AAPGQLSAAE (222 aa)) form a 3-dehydroquinase region. His1175 serves as the catalytic Proton acceptor; for 3-dehydroquinate dehydratase activity. The active-site Schiff-base intermediate with substrate; for 3-dehydroquinate dehydratase activity is the Lys1203. Residues 1286–1573 (AKKFAIFGKP…NAVLGTDETK (288 aa)) are shikimate dehydrogenase.

The protein in the N-terminal section; belongs to the sugar phosphate cyclases superfamily. Dehydroquinate synthase family. In the 2nd section; belongs to the EPSP synthase family. It in the 3rd section; belongs to the shikimate kinase family. This sequence in the 4th section; belongs to the type-I 3-dehydroquinase family. The protein in the C-terminal section; belongs to the shikimate dehydrogenase family. Homodimer. The cofactor is Zn(2+).

Its subcellular location is the cytoplasm. The catalysed reaction is 7-phospho-2-dehydro-3-deoxy-D-arabino-heptonate = 3-dehydroquinate + phosphate. It catalyses the reaction 3-dehydroquinate = 3-dehydroshikimate + H2O. The enzyme catalyses shikimate + NADP(+) = 3-dehydroshikimate + NADPH + H(+). It carries out the reaction shikimate + ATP = 3-phosphoshikimate + ADP + H(+). The catalysed reaction is 3-phosphoshikimate + phosphoenolpyruvate = 5-O-(1-carboxyvinyl)-3-phosphoshikimate + phosphate. It functions in the pathway metabolic intermediate biosynthesis; chorismate biosynthesis; chorismate from D-erythrose 4-phosphate and phosphoenolpyruvate: step 2/7. Its pathway is metabolic intermediate biosynthesis; chorismate biosynthesis; chorismate from D-erythrose 4-phosphate and phosphoenolpyruvate: step 3/7. It participates in metabolic intermediate biosynthesis; chorismate biosynthesis; chorismate from D-erythrose 4-phosphate and phosphoenolpyruvate: step 4/7. The protein operates within metabolic intermediate biosynthesis; chorismate biosynthesis; chorismate from D-erythrose 4-phosphate and phosphoenolpyruvate: step 5/7. It functions in the pathway metabolic intermediate biosynthesis; chorismate biosynthesis; chorismate from D-erythrose 4-phosphate and phosphoenolpyruvate: step 6/7. Its function is as follows. The AROM polypeptide catalyzes 5 consecutive enzymatic reactions in prechorismate polyaromatic amino acid biosynthesis. In Talaromyces marneffei (strain ATCC 18224 / CBS 334.59 / QM 7333) (Penicillium marneffei), this protein is Pentafunctional AROM polypeptide 1.